Consider the following 862-residue polypeptide: Cytosolic carboxypeptidase 2 (862 aa).

One can recognise a Peptidase M14 domain in the interval 359–629 (YPYTYTDLQC…HVCDTLLDFC (271 aa)). 3 residues coordinate Zn(2+): His425, Glu428, and His521. The Proton donor/acceptor role is filled by Glu593. 3 disordered regions span residues 669–692 (SDIPLSDIESSTSGSDSSLSDGPP), 704–728 (NQKTVLKNPKKKRLQTRKQRNEQYQ), and 750–836 (STLQ…PNWS). Residues 674 to 689 (SDIESSTSGSDSSLSD) are compositionally biased toward low complexity. Basic residues predominate over residues 711-721 (NPKKKRLQTRK). The segment covering 813–825 (ASCSPKRSTNSSL) has biased composition (polar residues).

The protein belongs to the peptidase M14 family. In terms of assembly, interacts with RARRES1, KIF11 and MAPRE1. Zn(2+) is required as a cofactor. Widely expressed. Expressed in tissues with motile cilia such as testis, lung and trachea. Also detected in brain, eye, muscle, pancreas, intestine, stomach, pituitary, spleen, adrenal and kidney. Expressed in mitral and granular cells in brain.

The protein localises to the cytoplasm. The protein resides in the cytosol. Its subcellular location is the cytoskeleton. It localises to the microtubule organizing center. It is found in the centrosome. The protein localises to the centriole. The protein resides in the cilium basal body. It catalyses the reaction (L-glutamyl)(n+1)-gamma-L-glutamyl-L-glutamyl-[protein] + H2O = (L-glutamyl)(n)-gamma-L-glutamyl-L-glutamyl-[protein] + L-glutamate. With respect to regulation, inhibited by RARRES1. Metallocarboxypeptidase that mediates deglutamylation of tubulin and non-tubulin target proteins. Catalyzes the removal of polyglutamate side chains present on the gamma-carboxyl group of glutamate residues within the C-terminal tail of tubulin protein. Specifically cleaves tubulin long-side-chains, while it is not able to remove the branching point glutamate. Also catalyzes the removal of polyglutamate residues from the carboxy-terminus of non-tubulin proteins such as MYLK. The sequence is that of Cytosolic carboxypeptidase 2 from Mus musculus (Mouse).